Consider the following 183-residue polypeptide: Translation initiation factor IF-3 (183 aa).

A compositionally biased stretch (polar residues) spans 1 to 13 (MKQPDRNQQQGAK). The interval 1-24 (MKQPDRNQQQGAKSNRPAINDEIR) is disordered.

The protein belongs to the IF-3 family. In terms of assembly, monomer.

Its subcellular location is the cytoplasm. IF-3 binds to the 30S ribosomal subunit and shifts the equilibrium between 70S ribosomes and their 50S and 30S subunits in favor of the free subunits, thus enhancing the availability of 30S subunits on which protein synthesis initiation begins. This is Translation initiation factor IF-3 from Acinetobacter baylyi (strain ATCC 33305 / BD413 / ADP1).